The primary structure comprises 377 residues: Opsin-5 (377 aa).

The Extracellular portion of the chain corresponds to 1–33; it reads MALNHTALPQDERLPHYLRDEDPFASKLSWEAD. Residue Asn4 is glycosylated (N-linked (GlcNAc...) asparagine). A helical transmembrane segment spans residues 34-54; that stretch reads LVAGFYLTIIGILSTFGNGYV. Over 55 to 74 the chain is Cytoplasmic; that stretch reads LYMSSRRKKKLRPAEIMTIN. Residues 75 to 95 traverse the membrane as a helical segment; that stretch reads LAVCDLGISVVGKPFTIISCF. At 96–108 the chain is on the extracellular side; sequence CHRWVFGWFGCRW. Cys106 and Cys183 are oxidised to a cystine. A helical transmembrane segment spans residues 109-129; sequence YGWAGFFFGCGSLITMTAVSL. At 130 to 150 the chain is on the cytoplasmic side; that stretch reads DRYLKICYLSYGVWLKRKHAY. A helical membrane pass occupies residues 151–171; it reads ICLAVIWAYASFWTTMPLVGL. The Extracellular portion of the chain corresponds to 172–197; that stretch reads GDYAPEPFGTSCTLDWWLAQASGGGQ. A helical membrane pass occupies residues 198–218; it reads VFILSILFFCLLLPTAVIVFS. The Cytoplasmic portion of the chain corresponds to 219-252; it reads YAKIIAKVKSSSKEVAHFDSRIHSSHVLEVKLTK. Residues 253-273 form a helical membrane-spanning segment; the sequence is VAMLICAGFLIAWIPYAVVSV. Over 274–288 the chain is Extracellular; the sequence is WSAFGRPDSIPIQLS. The helical transmembrane segment at 289-309 threads the bilayer; that stretch reads VVPTLLAKSAAMYNPIIYQVI. Position 296 is an N6-(retinylidene)lysine (Lys296). The Cytoplasmic portion of the chain corresponds to 310–377; that stretch reads DYRFACCQAG…HSNDGDCGKK (68 aa). S-palmitoyl cysteine attachment occurs at residues Cys315 and Cys316. Positions 357-377 are disordered; it reads FTSAHVMDGESHSNDGDCGKK. Residues 363–377 show a composition bias toward basic and acidic residues; sequence MDGESHSNDGDCGKK.

This sequence belongs to the G-protein coupled receptor 1 family. Opsin subfamily. It is uncertain whether Cys-315 or Cys-316 is palmitoylated. In terms of tissue distribution, expressed in the brain (at protein level). Weakly expressed in the skin and liver (at protein level). Abundantly expressed in striated muscle cells. Expressed in Math7/Atok7-dependent retinal ganglion cells in the ganglion cell layer (at protein level). Additionally expressed in horizontal and amacrine cells in the inner nuclear layer of the retina (at protein level). Expressed around the base of hair follicles and in epidermal and sebaceous gland cells of the outer ear (at protein level). Abundantly expressed in vibrissae hair follicles and weakly expressed in the vibrissae skin pad, dorsal back skin, and tail.

It localises to the cell membrane. In terms of biological role, G-protein coupled receptor which selectively activates G(i) type G proteins via ultraviolet A (UVA) light-mediated activation in the retina. Preferentially binds the chromophore 11-cis retinal and is a bistable protein that displays emission peaks at 380 nm (UVA light) and 470 nm (blue light). Required for the light-response in the inner plexiform layer, and contributes to the regulation of the light-response in the nerve fiber layer, via phosphorylated DAT/SLC6A3 dopamine uptake. Involved in local corneal and retinal circadian rhythm photoentrainment via modulation of the UVA light-induced phase-shift of the retina clock. Acts as a circadian photoreceptor in the outer ear and vibrissal pads, via modulation of circadian clock-gene expression in response to violet light during the light-to-dark transition phase and night phase of the circadian cycle. Required in the retina to negatively regulate hyaloid vessel regression during postnatal development via light-dependent OPN5-SLC32A1-DRD2-VEGFR2 signaling. Involved in the light-dependent regulation of retina and vitreous compartment dopamine levels. This chain is Opsin-5 (Opn5), found in Mus musculus (Mouse).